Reading from the N-terminus, the 446-residue chain is D-inositol 3-phosphate glycosyltransferase (446 aa).

1D-myo-inositol 3-phosphate is bound at residue His-19. UDP-N-acetyl-alpha-D-glucosamine contacts are provided by residues 25–26 (QP) and Gly-33. 1D-myo-inositol 3-phosphate contacts are provided by residues 30–35 (DAGGMN), Lys-88, Tyr-121, Thr-145, and Arg-165. Positions 239, 244, and 303 each coordinate UDP-N-acetyl-alpha-D-glucosamine. Residues Tyr-312, Arg-313, and Ser-315 each coordinate Mg(2+). Residues Glu-325 and Glu-333 each contribute to the UDP-N-acetyl-alpha-D-glucosamine site. A Mg(2+)-binding site is contributed by Thr-339.

The protein belongs to the glycosyltransferase group 1 family. MshA subfamily. Homodimer.

The catalysed reaction is 1D-myo-inositol 3-phosphate + UDP-N-acetyl-alpha-D-glucosamine = 1D-myo-inositol 2-acetamido-2-deoxy-alpha-D-glucopyranoside 3-phosphate + UDP + H(+). Functionally, catalyzes the transfer of a N-acetyl-glucosamine moiety to 1D-myo-inositol 3-phosphate to produce 1D-myo-inositol 2-acetamido-2-deoxy-glucopyranoside 3-phosphate in the mycothiol biosynthesis pathway. This Rhodococcus opacus (strain B4) protein is D-inositol 3-phosphate glycosyltransferase.